The chain runs to 782 residues: cGMP-specific 3',5'-cyclic phosphodiesterase gamma (782 aa).

The Cytoplasmic segment spans residues 1–69 (MKHMFKNILF…LCDNMYSKKY (69 aa)). Residues 70 to 90 (VILVSHLISLLLMYSVCLIVG) traverse the membrane as a helical segment. Residues 91-97 (NINDLFS) lie on the Extracellular side of the membrane. The chain crosses the membrane as a helical span at residues 98–118 (VLKLTYILLHTFTAINIILIL). The Cytoplasmic segment spans residues 119 to 135 (TLHATHYVEMFKSIKGE). The helical transmembrane segment at 136 to 156 (IFIFYIMMIFVIWCSWLFILF) threads the bilayer. The Extracellular segment spans residues 157–181 (NNIKDLLPIVVNVNNFLYATYANNK). Residues 182 to 202 (INIVLGFFAYLPIFYLITIIP) form a helical membrane-spanning segment. Residues 203 to 208 (CRICYS) are Cytoplasmic-facing. A helical membrane pass occupies residues 209-229 (CAFDILFFIMKVAIFSVYYLI). Over 230–239 (TMKSYILTDN) the chain is Extracellular. Residues 240 to 260 (IFMIISALVGSLFIFVIRYII) traverse the membrane as a helical segment. Residues 261–782 (EIQRRLSFHN…YAPNLNIYKL (522 aa)) are Cytoplasmic-facing. The tract at residues 376–396 (GSKEEPEAESESECVDESKEG) is disordered. The segment covering 381-390 (PEAESESECV) has biased composition (acidic residues). The region spanning 423 to 751 (YEEKENEILK…SKWTKIEKDE (329 aa)) is the PDEase domain. Catalysis depends on H504, which acts as the Proton donor. Position 504 to 508 (504 to 508 (HNSIH)) interacts with a nucleoside 3',5'-cyclic phosphate. H508, H544, D545, and D654 together coordinate a divalent metal cation. D545, D654, and Q706 together coordinate a nucleoside 3',5'-cyclic phosphate.

Belongs to the cyclic nucleotide phosphodiesterase family. The cofactor is a divalent metal cation.

The protein resides in the membrane. It localises to the endoplasmic reticulum membrane. It carries out the reaction 3',5'-cyclic GMP + H2O = GMP + H(+). It participates in purine metabolism; 3',5'-cyclic GMP degradation; GMP from 3',5'-cyclic GMP: step 1/1. In terms of biological role, specifically hydrolyzes the second messenger cGMP, which is a key regulator of many important physiological processes. Probably by regulating cGMP levels, required for sporozoite motility and invasion of the mosquito salivary glands. The polypeptide is cGMP-specific 3',5'-cyclic phosphodiesterase gamma (Plasmodium yoelii).